Here is a 184-residue protein sequence, read N- to C-terminus: dCTP deaminase (184 aa).

DCTP contacts are provided by residues 107-112 (KSTYAR), 131-133 (TLE), Q152, Y166, and Q176. E133 (proton donor/acceptor) is an active-site residue.

It belongs to the dCTP deaminase family. As to quaternary structure, homotrimer.

It catalyses the reaction dCTP + H2O + H(+) = dUTP + NH4(+). It functions in the pathway pyrimidine metabolism; dUMP biosynthesis; dUMP from dCTP (dUTP route): step 1/2. In terms of biological role, catalyzes the deamination of dCTP to dUTP. The sequence is that of dCTP deaminase from Novosphingobium aromaticivorans (strain ATCC 700278 / DSM 12444 / CCUG 56034 / CIP 105152 / NBRC 16084 / F199).